Here is a 794-residue protein sequence, read N- to C-terminus: E3 ubiquitin-protein ligase wwp-1 (794 aa).

A compositionally biased stretch (low complexity) spans 1–16 (MARNEPSSQQPSSSGS). Disordered stretches follow at residues 1-31 (MARN…KPSK) and 155-198 (RSAG…AAPT). One can recognise a C2 domain in the interval 10–124 (QPSSSGSNGT…TRNENGEFKN (115 aa)). The span at 17–27 (NGTPAQQNGSA) shows a compositional bias: polar residues. Residues 161–186 (AETAASASSEASTSNGVATSSSARRP) are compositionally biased toward low complexity. WW domains follow at residues 219–252 (EQLP…RPST), 253–286 (QPLP…RPTA), 324–358 (GPLP…DPRT), and 366–399 (QPLP…DPRT). Residues 460–794 (NAVDLRRRLY…IEMTEGFGNE (335 aa)) form the HECT domain. Catalysis depends on cysteine 762, which acts as the Glycyl thioester intermediate.

As to quaternary structure, interacts (via WW domains) with Kruppel-like factor klf-1. Interacts with ubiquitin-conjugating enzyme E2 ubc-18. Expressed in neurons localized in the head and tail of adults.

It catalyses the reaction S-ubiquitinyl-[E2 ubiquitin-conjugating enzyme]-L-cysteine + [acceptor protein]-L-lysine = [E2 ubiquitin-conjugating enzyme]-L-cysteine + N(6)-ubiquitinyl-[acceptor protein]-L-lysine.. Its pathway is protein modification; protein ubiquitination. Functionally, E3 ubiquitin-protein ligase which accepts ubiquitin from an E2 ubiquitin-conjugating enzyme in the form of a thioester and then directly transfers the ubiquitin to targeted substrates. Ubiquitinates klf-1. Required for diet restriction-mediated lifespan extension, acting in concert with Kruppel-like factor klf-1 in the intestine to perhaps modulate genes involved in lipid metabolism. Probably acting downstream of the Insulin/IGF-1-like signaling (IIS) mediated pathway, plays a role in the immune response to infection by the Gram-negative bacterium P.aeruginosa, at least partly in response to bacterial pore-forming toxins. This chain is E3 ubiquitin-protein ligase wwp-1, found in Caenorhabditis elegans.